Consider the following 64-residue polypeptide: Large ribosomal subunit protein uL29 (64 aa).

It belongs to the universal ribosomal protein uL29 family.

This Methanothermobacter thermautotrophicus (strain ATCC 29096 / DSM 1053 / JCM 10044 / NBRC 100330 / Delta H) (Methanobacterium thermoautotrophicum) protein is Large ribosomal subunit protein uL29 (rpl29).